Consider the following 216-residue polypeptide: Peptide deformylase 1 (216 aa).

C135 and H177 together coordinate Fe cation. The active site involves E178. Residue H181 coordinates Fe cation.

Belongs to the polypeptide deformylase family. Fe(2+) serves as cofactor.

The catalysed reaction is N-terminal N-formyl-L-methionyl-[peptide] + H2O = N-terminal L-methionyl-[peptide] + formate. Functionally, removes the formyl group from the N-terminal Met of newly synthesized proteins. Requires at least a dipeptide for an efficient rate of reaction. N-terminal L-methionine is a prerequisite for activity but the enzyme has broad specificity at other positions. The chain is Peptide deformylase 1 from Streptomyces avermitilis (strain ATCC 31267 / DSM 46492 / JCM 5070 / NBRC 14893 / NCIMB 12804 / NRRL 8165 / MA-4680).